Reading from the N-terminus, the 538-residue chain is Cytochrome P450 monooxygenase claM (538 aa).

The helical transmembrane segment at 36-56 (LSIGLVVLIGAISSFLLQQFL) threads the bilayer. N-linked (GlcNAc...) asparagine glycans are attached at residues Asn306 and Asn425. Cys472 is a heme binding site.

It belongs to the cytochrome P450 family. The cofactor is heme.

It is found in the membrane. The enzyme catalyses 2 nataloe emodin + reduced [NADPH--hemoprotein reductase] + O2 = cladofulvin + oxidized [NADPH--hemoprotein reductase] + 2 H2O + H(+). The protein operates within pigment biosynthesis. Functionally, cytochrome P450 monooxygenase; part of the gene cluster that mediates the biosynthesis of the bianthraquinone cladofulvin, a conidial pigment not required for virulence but that plays a role in fitness and resistance to environmental stresses including UV light and low-temperature stress. The pathway begins with the synthesis of atrochrysone thioester by the polyketide synthase (PKS) claG. The atrochrysone carboxyl ACP thioesterase claF then breaks the thioester bond and releases the atrochrysone carboxylic acid from claG. This compound is decarboxylated by claH to yield emodin, which is further converted to chrysophanol hydroquinone by the reductase claC and the dehydratase claB. The cytochrome monooxygenase P450 claM then catalyzes the dimerization of nataloe-emodin to cladofulvin. This Passalora fulva (Tomato leaf mold) protein is Cytochrome P450 monooxygenase claM.